The sequence spans 472 residues: Estrogen receptor beta (472 aa).

Positions 1 to 104 (MAFCSPAMMN…NPGSKRDAHF (104 aa)) are modulating. 2 consecutive NR C4-type zinc fingers follow at residues 105 to 125 (CAVCSDYASGYHYGVWSCEGC) and 141 to 165 (CPATNQCTIDKNRRKSCQACRLRKC). The segment at residues 105 to 170 (CAVCSDYASG…RLRKCYEVGM (66 aa)) is a DNA-binding region (nuclear receptor). Residues 217–449 (SPEQFVLTLL…DLLLEMLNAH (233 aa)) enclose the NR LBD domain.

Belongs to the nuclear hormone receptor family. NR3 subfamily. In terms of assembly, binds DNA as a homodimer. Can form a heterodimer with ER-alpha. As to expression, a high expression is seen in the telencephalon, diencephalon, pituitary, testis and kidneys but little or no expression is seen in the cerebellum, pectoral muscle and adrenal gland.

It localises to the nucleus. In terms of biological role, binds estrogens with an affinity similar to that of ER-alpha, and activates expression of reporter genes containing estrogen response elements (ERE) in an estrogen-dependent manner. The polypeptide is Estrogen receptor beta (ESR2) (Coturnix japonica (Japanese quail)).